We begin with the raw amino-acid sequence, 611 residues long: MGKQGSPRSPRPETIDKEEKFGRRSLDSLSGNDLLLGRRIYASEVSKAQGSKHDQSSGSSNKFWKKQHSWLRRNFKSIVLMISVTGFIFCMDSIMVSIFHSDSRAVVQDISRLSNMTLHKNGAVDASPVQMYSRLLNLASDSLAKNEFKPDTPNFREERSSKSSQWKPCADNNKAAVALERSRELSNGYIMVSANGGLNQQRVAICNAVAVAALLNATLVLPRFLYSNVWKDPSQFGDIYQEDHFIEYLKDEVNIVKNLPQHLKSTDNKNLSLVTDTELVKEATPVDYIEHVLPLLKKYGMVHLFGYGNRLGFDPLPFDVQRLRCKCNFHALKFAPKIQEAGSLLVKRIRRFKTSRSRLEEALLGESMVKSTVKGEEEPLKYLALHLRFEEDMVAYSLCDFGGGEAERKELQAYREDHFPLLLKRLKKSKPVSPEELRKTGKCPLTPEEATLVLAGLGFKRKTYIYLAGSQIYGGSSRMLPLTRLYPNIATKETLLTPQELAPFKNFSSQLAALDFIACIASDVFAMTDSGSQLSSLVSGFRNYYGNGQAPTLRPNKKRLAAILSDSETIKWKIFEDRVRKMVEEGQKLRTRPYGRSIYRQPRCPECMCKF.

Residues 1–29 form a disordered region; that stretch reads MGKQGSPRSPRPETIDKEEKFGRRSLDSL. Basic and acidic residues predominate over residues 10–26; the sequence is PRPETIDKEEKFGRRSL. The chain crosses the membrane as a helical; Signal-anchor for type II membrane protein span at residues 78–98; that stretch reads IVLMISVTGFIFCMDSIMVSI. 3 N-linked (GlcNAc...) asparagine glycosylation sites follow: Asn-115, Asn-216, and Asn-270. 386–388 contributes to the substrate binding site; it reads HLR. The N-linked (GlcNAc...) asparagine glycan is linked to Asn-506.

It belongs to the glycosyltransferase GT106 family.

It is found in the membrane. The protein operates within glycan metabolism. In Arabidopsis thaliana (Mouse-ear cress), this protein is O-fucosyltransferase 8.